A 102-amino-acid polypeptide reads, in one-letter code: Co-chaperonin GroES (102 aa).

It belongs to the GroES chaperonin family. In terms of assembly, heptamer of 7 subunits arranged in a ring. Interacts with the chaperonin GroEL.

It is found in the cytoplasm. In terms of biological role, together with the chaperonin GroEL, plays an essential role in assisting protein folding. The GroEL-GroES system forms a nano-cage that allows encapsulation of the non-native substrate proteins and provides a physical environment optimized to promote and accelerate protein folding. GroES binds to the apical surface of the GroEL ring, thereby capping the opening of the GroEL channel. The chain is Co-chaperonin GroES from Streptomyces coelicolor (strain ATCC BAA-471 / A3(2) / M145).